A 321-amino-acid polypeptide reads, in one-letter code: uncharacterized protein (321 aa).

The disordered stretch occupies residues 1–80 (MQGGQEVGRE…GELSGGWGEF (80 aa)).

This is an uncharacterized protein from Mus musculus (Mouse).